We begin with the raw amino-acid sequence, 121 residues long: Probable tail terminator protein (121 aa).

It belongs to the Skunalikevirus tail terminator protein family. Homohexamer. Interacts with the tail tube protein.

Its subcellular location is the virion. Its function is as follows. Plays an essential role in tail assembly by capping the rapidly polymerizing tail once it has reached its requisite length and serving as the interaction surface for the connector and the tail tube proteins. The chain is Probable tail terminator protein from Lactococcus phage SK1 (Lactococcus lactis bacteriophage SK1).